Reading from the N-terminus, the 271-residue chain is Replication-associated protein A (271 aa).

The CRESS-DNA virus Rep endonuclease domain maps to 11–114; it reads LHRNANTFLT…PLAVFERGTF (104 aa). The short motif at 18–21 is the RCR-1 element; that stretch reads FLTY. Positions 52, 60, and 62 each coordinate a divalent metal cation. The RCR-2 signature appears at 60–62; the sequence is HLH. The active-site For DNA cleavage activity is tyrosine 100. The short motif at 100–103 is the RCR-3 element; the sequence is YILK. Glutamate 104 is an a divalent metal cation binding site. The oligomerization stretch occupies residues 174 to 186; that stretch reads SANKLFPDIQEEF. The binding to RBR1 stretch occupies residues 197–201; that stretch reads LLCNE. The segment at 220-229 is transactivation; it reads MLLQPTCYTV. Residues 244-264 show a composition bias toward polar residues; the sequence is SQQMKDQESRASTSSVQQGQG. The segment at 244–271 is disordered; that stretch reads SQQMKDQESRASTSSVQQGQGNLLGPEV.

This sequence belongs to the geminiviridae Rep protein family. In terms of assembly, homooligomer. Interacts with host retinoblastoma-related protein 1 (RBR1), and may thereby deregulate the host cell cycle. Part of the C- and V-complexes which are RepA-Rep-DNA complexes involved in the c-sense and v-sense transcription. Mg(2+) serves as cofactor. Mn(2+) is required as a cofactor.

The protein localises to the host nucleus. It localises to the host cytoplasm. Implicated in enhancement of V-sense gene expression. Acts a an inhibitor of C-sense gene transcription. In Avena sativa (Oat), this protein is Replication-associated protein A.